Consider the following 267-residue polypeptide: MLTSSGYIQHHLTNAQMCTVDGSIAFNYACADAGFWTWHIDSLLFSVGLGVLFLFVFYKVGQKATTGVPGKLQCAVEMLMEFVSNAVKDSFHGRSPVIAPLALTIFVWILLMNTMDLIPVDFIPEAAKQILGVPYLKVVPTTDMNITFGLSLSVFALIVFYSIKIKGITGFVKELTLQPFNHWAFIPVNFILETIALIAKPISLSLRLFGNLYAGELIFILIALMPWWSQAALSVPWAIFHILVIVLQAFIFMMLTIVYLSMAHEDH.

Transmembrane regions (helical) follow at residues 38 to 58, 98 to 118, 145 to 165, 208 to 228, and 238 to 258; these read WHID…FVFY, IAPL…MDLI, NITF…SIKI, LFGN…MPWW, and AIFH…LTIV.

The protein belongs to the ATPase A chain family. F-type ATPases have 2 components, CF(1) - the catalytic core - and CF(0) - the membrane proton channel. CF(1) has five subunits: alpha(3), beta(3), gamma(1), delta(1), epsilon(1). CF(0) has three main subunits: a(1), b(2) and c(9-12). The alpha and beta chains form an alternating ring which encloses part of the gamma chain. CF(1) is attached to CF(0) by a central stalk formed by the gamma and epsilon chains, while a peripheral stalk is formed by the delta and b chains.

It is found in the cell inner membrane. In terms of biological role, key component of the proton channel; it plays a direct role in the translocation of protons across the membrane. This chain is ATP synthase subunit a, found in Psychromonas ingrahamii (strain DSM 17664 / CCUG 51855 / 37).